Here is a 206-residue protein sequence, read N- to C-terminus: Large ribosomal subunit protein uL4 (206 aa).

A disordered region spans residues 47-94; it reads NRAQKGRAEVSKSTRKPWRQKGTGRARAGMASSPLWRGGGRVFPNSPE. Basic residues predominate over residues 59–70; the sequence is STRKPWRQKGTG.

The protein belongs to the universal ribosomal protein uL4 family. As to quaternary structure, part of the 50S ribosomal subunit.

Its function is as follows. One of the primary rRNA binding proteins, this protein initially binds near the 5'-end of the 23S rRNA. It is important during the early stages of 50S assembly. It makes multiple contacts with different domains of the 23S rRNA in the assembled 50S subunit and ribosome. Functionally, forms part of the polypeptide exit tunnel. The protein is Large ribosomal subunit protein uL4 of Aromatoleum aromaticum (strain DSM 19018 / LMG 30748 / EbN1) (Azoarcus sp. (strain EbN1)).